A 399-amino-acid polypeptide reads, in one-letter code: Phosphoglycerate kinase (399 aa).

Residues 22–24, R38, 61–64, R120, and R153 contribute to the substrate site; these read DFN and HLGR. ATP-binding positions include K204, E326, and 352-355; that span reads GGDT.

This sequence belongs to the phosphoglycerate kinase family. Monomer.

The protein localises to the cytoplasm. It catalyses the reaction (2R)-3-phosphoglycerate + ATP = (2R)-3-phospho-glyceroyl phosphate + ADP. It participates in carbohydrate degradation; glycolysis; pyruvate from D-glyceraldehyde 3-phosphate: step 2/5. The chain is Phosphoglycerate kinase from Citrifermentans bemidjiense (strain ATCC BAA-1014 / DSM 16622 / JCM 12645 / Bem) (Geobacter bemidjiensis).